The following is a 562-amino-acid chain: SLAIN motif-containing protein-like (562 aa).

3 disordered regions span residues 292-313, 344-381, and 409-562; these read QDYA…LHSL, HRYS…IQNH, and SLEA…DGCY. Composition is skewed to low complexity over residues 295-311 and 345-355; these read ASSS…ASLH and RYSPSPLSSPR. 4 stretches are compositionally biased toward polar residues: residues 356-370, 424-442, 465-531, and 539-553; these read CQSP…TTSR, QGPS…STPP, VSTS…STVP, and SRRS…STLG.

This sequence belongs to the SLAIN motif-containing family.

This is SLAIN motif-containing protein-like from Xenopus laevis (African clawed frog).